The primary structure comprises 489 residues: Tandem C2 domains nuclear protein (489 aa).

Ser82, Ser155, Ser167, Ser173, and Ser210 each carry phosphoserine. The tract at residues 189 to 214 (DSFSSVPSSSSSRKNSQGSNRSLDTI) is disordered. The segment covering 191–210 (FSSVPSSSSSRKNSQGSNRS) has biased composition (low complexity). Residues Thr213 and Thr215 each carry the phosphothreonine modification. The residue at position 217 (Ser217) is a Phosphoserine. 2 consecutive C2 domains span residues 222 to 341 (DLGR…SLEI) and 343 to 470 (APSK…NQWK). The Nuclear localization signal signature appears at 446–448 (RRK).

It localises to the nucleus. The protein is Tandem C2 domains nuclear protein (Tc2n) of Mus musculus (Mouse).